Consider the following 161-residue polypeptide: Nucleotide-binding protein Sden_0770 (161 aa).

It belongs to the YajQ family.

Nucleotide-binding protein. In Shewanella denitrificans (strain OS217 / ATCC BAA-1090 / DSM 15013), this protein is Nucleotide-binding protein Sden_0770.